The following is a 330-amino-acid chain: Ketol-acid reductoisomerase (NADP(+)) (330 aa).

Positions 1–181 constitute a KARI N-terminal Rossmann domain; sequence MNVYYEQDAD…GGAKAGVIET (181 aa). Residues 24-27, R47, S50, S52, and 82-85 each bind NADP(+); these read YGSQ and DQYQ. The active site involves H107. G133 provides a ligand contact to NADP(+). In terms of domain architecture, KARI C-terminal knotted spans 182-327; that stretch reads TIKNETETDL…AKLRNMMSWL (146 aa). Residues D190, E194, E226, and E230 each contribute to the Mg(2+) site. S251 is a substrate binding site.

The protein belongs to the ketol-acid reductoisomerase family. Mg(2+) is required as a cofactor.

It carries out the reaction (2R)-2,3-dihydroxy-3-methylbutanoate + NADP(+) = (2S)-2-acetolactate + NADPH + H(+). The catalysed reaction is (2R,3R)-2,3-dihydroxy-3-methylpentanoate + NADP(+) = (S)-2-ethyl-2-hydroxy-3-oxobutanoate + NADPH + H(+). It functions in the pathway amino-acid biosynthesis; L-isoleucine biosynthesis; L-isoleucine from 2-oxobutanoate: step 2/4. The protein operates within amino-acid biosynthesis; L-valine biosynthesis; L-valine from pyruvate: step 2/4. In terms of biological role, involved in the biosynthesis of branched-chain amino acids (BCAA). Catalyzes an alkyl-migration followed by a ketol-acid reduction of (S)-2-acetolactate (S2AL) to yield (R)-2,3-dihydroxy-isovalerate. In the isomerase reaction, S2AL is rearranged via a Mg-dependent methyl migration to produce 3-hydroxy-3-methyl-2-ketobutyrate (HMKB). In the reductase reaction, this 2-ketoacid undergoes a metal-dependent reduction by NADPH to yield (R)-2,3-dihydroxy-isovalerate. The sequence is that of Ketol-acid reductoisomerase (NADP(+)) from Chlorobium phaeovibrioides (strain DSM 265 / 1930) (Prosthecochloris vibrioformis (strain DSM 265)).